A 271-amino-acid polypeptide reads, in one-letter code: OX-2 membrane glycoprotein homolog (271 aa).

A signal peptide spans 1-24 (MSSLFISLPWVAFIWLALLGAVGG). Residues 25 to 227 (ARVQGPMRGS…QGPLAHDLPA (203 aa)) lie on the Extracellular side of the membrane. The 104-residue stretch at 26–129 (RVQGPMRGSA…SCTACLEVTS (104 aa)) folds into the Ig-like V-type domain. Cys-39 and Cys-109 are oxidised to a cystine. 6 N-linked (GlcNAc...) asparagine; by host glycosylation sites follow: Asn-83, Asn-91, Asn-138, Asn-157, Asn-166, and Asn-208. Positions 130–220 (PPTGHVQVNS…ISIPASIQGP (91 aa)) constitute an Ig-like C2-type domain. A disulfide bridge connects residues Cys-148 and Cys-202. A helical transmembrane segment spans residues 228-248 (AQGTLAGVAITLVGLFGIFAL). The Cytoplasmic segment spans residues 249 to 271 (HHCRRKQGGASPTSDDMDPLSTQ).

As to quaternary structure, interacts with human CD200R1. In terms of processing, N-glycosylated.

It is found in the host cell membrane. In terms of biological role, dramatically stimulates primary monocytes, macrophages, and dendritic cells to produce the inflammatory cytokines interleukin 1-beta, IL-6, monocyte chemoattractant protein 1, and TNF-alpha. The induction of inflammatory cytokine production potentially promotes the cytokine-mediated angiogenic proliferation of KSHV-infected cells. This chain is OX-2 membrane glycoprotein homolog (K14), found in Human herpesvirus 8 type P (isolate GK18) (HHV-8).